A 1207-amino-acid polypeptide reads, in one-letter code: Putative coatomer subunit alpha (1207 aa).

WD repeat units follow at residues 9 to 50 (SRSS…DRFD), 51 to 90 (GHDG…LLFS), 93 to 134 (GHMD…AILT), 135 to 174 (GHSH…MKNA), 210 to 249 (GHDR…AWEV), 254 to 293 (GHFN…AVQT), 296 to 336 (RDND…HALN), and 370 to 411 (SAWL…NSLP). Residues Ser409 and Ser942 each carry the phosphoserine modification.

In terms of assembly, oligomeric complex that consists of at least the alpha, beta, beta', gamma, delta, epsilon and zeta subunits.

The protein localises to the cytoplasm. It is found in the golgi apparatus membrane. Its function is as follows. The coatomer is a cytosolic protein complex that binds to dilysine motifs and reversibly associates with Golgi non-clathrin-coated vesicles, which further mediate biosynthetic protein transport from the ER, via the Golgi up to the trans Golgi network. Coatomer complex is required for budding from Golgi membranes, and is essential for the retrograde Golgi-to-ER transport of dilysine-tagged proteins. The polypeptide is Putative coatomer subunit alpha (Schizosaccharomyces pombe (strain 972 / ATCC 24843) (Fission yeast)).